We begin with the raw amino-acid sequence, 496 residues long: MEKYILSLDQGTTSTRAIVFNKAGEIVHIAQKEFRQYFPNPGWVEHNANEIWGSVLSVIASALSESGIEAGQIAGIGITNQRETTVVWDKHTGKPVYNAIVWQSRQSAEICQELKEKGYEETIREKTGLLIDPYFSGTKVKWILDHVEGAREKAENGDLLFGTIDSWLIWKMSGGKAHVTDYSNASRTLMFNIYDLKWDDELLDILGVPKSMLPEVKPSSHVYAETVDYHFFGKNIPIAGAAGDQQAALFGQACFEEGMVKNTYGTGCFMLMNTGEKAIKSEHGLLTTIAWGIDGKVEYALEGSVFVAGSAIQWLRDGLRMFKDAKESEKYAVRAESADGVYVVPAFVGLGTPYWDSDVRGAVFGLTRGTTKEHFIRATLEALAYQTKDVLDAMKEDSGIPVKTLRVDGGAVKNNFLMDFQGDILDVPVERPEINETTALGSAYLAGLAVGFWSDRSEIKDQWQLDKRFEPKMEEKERESLYNGWKKAVNAARAFK.

Threonine 12 contacts ADP. 3 residues coordinate ATP: threonine 12, threonine 13, and serine 14. Threonine 12 contacts sn-glycerol 3-phosphate. Residue arginine 16 participates in ADP binding. Residues arginine 82, glutamate 83, and tyrosine 134 each coordinate sn-glycerol 3-phosphate. Residues arginine 82, glutamate 83, and tyrosine 134 each contribute to the glycerol site. Histidine 230 is subject to Phosphohistidine; by HPr. Aspartate 244 provides a ligand contact to sn-glycerol 3-phosphate. Aspartate 244 and glutamine 245 together coordinate glycerol. Threonine 266 and glycine 309 together coordinate ADP. 4 residues coordinate ATP: threonine 266, glycine 309, glutamine 313, and glycine 410. ADP-binding residues include glycine 410 and asparagine 414.

Belongs to the FGGY kinase family. In terms of assembly, homotetramer and homodimer (in equilibrium). The phosphoenolpyruvate-dependent sugar phosphotransferase system (PTS), including enzyme I, and histidine-containing protein (HPr) are required for the phosphorylation, which leads to the activation of the enzyme.

The catalysed reaction is glycerol + ATP = sn-glycerol 3-phosphate + ADP + H(+). It functions in the pathway polyol metabolism; glycerol degradation via glycerol kinase pathway; sn-glycerol 3-phosphate from glycerol: step 1/1. Its activity is regulated as follows. Activated by phosphorylation and inhibited by fructose 1,6-bisphosphate (FBP). In terms of biological role, key enzyme in the regulation of glycerol uptake and metabolism. Catalyzes the phosphorylation of glycerol to yield sn-glycerol 3-phosphate. The protein is Glycerol kinase of Bacillus licheniformis (strain ATCC 14580 / DSM 13 / JCM 2505 / CCUG 7422 / NBRC 12200 / NCIMB 9375 / NCTC 10341 / NRRL NRS-1264 / Gibson 46).